The primary structure comprises 467 residues: Uronate isomerase (467 aa).

The protein belongs to the metallo-dependent hydrolases superfamily. Uronate isomerase family.

It catalyses the reaction D-glucuronate = D-fructuronate. The catalysed reaction is aldehydo-D-galacturonate = keto-D-tagaturonate. Its pathway is carbohydrate metabolism; pentose and glucuronate interconversion. The sequence is that of Uronate isomerase from Actinobacillus succinogenes (strain ATCC 55618 / DSM 22257 / CCUG 43843 / 130Z).